We begin with the raw amino-acid sequence, 175 residues long: Succinate dehydrogenase assembly factor 2, mitochondrial (175 aa).

The disordered stretch occupies residues Pro-42–Thr-71. Polar residues predominate over residues Ala-51–Glu-60.

It belongs to the SDHAF2 family. In terms of assembly, interacts with the flavoprotein subunit within the SDH catalytic dimer.

The protein resides in the mitochondrion matrix. Functionally, plays an essential role in the assembly of succinate dehydrogenase (SDH), an enzyme complex (also referred to as respiratory complex II) that is a component of both the tricarboxylic acid (TCA) cycle and the mitochondrial electron transport chain, and which couples the oxidation of succinate to fumarate with the reduction of ubiquinone (coenzyme Q) to ubiquinol. Required for flavinylation (covalent attachment of FAD) of the flavoprotein subunit of the SDH catalytic dimer. This chain is Succinate dehydrogenase assembly factor 2, mitochondrial, found in Cryptococcus neoformans var. neoformans serotype D (strain B-3501A) (Filobasidiella neoformans).